The primary structure comprises 431 residues: Argininosuccinate lyase (431 aa).

It belongs to the lyase 1 family. Argininosuccinate lyase subfamily.

Its subcellular location is the cytoplasm. The catalysed reaction is 2-(N(omega)-L-arginino)succinate = fumarate + L-arginine. It functions in the pathway amino-acid biosynthesis; L-arginine biosynthesis; L-arginine from L-ornithine and carbamoyl phosphate: step 3/3. In Stenotrophomonas maltophilia (strain R551-3), this protein is Argininosuccinate lyase.